Reading from the N-terminus, the 82-residue chain is Small ribosomal subunit protein bS18A (82 aa).

It belongs to the bacterial ribosomal protein bS18 family. Part of the 30S ribosomal subunit. Forms a tight heterodimer with protein bS6.

Functionally, binds as a heterodimer with protein bS6 to the central domain of the 16S rRNA, where it helps stabilize the platform of the 30S subunit. This is Small ribosomal subunit protein bS18A from Streptomyces griseus subsp. griseus (strain JCM 4626 / CBS 651.72 / NBRC 13350 / KCC S-0626 / ISP 5235).